The sequence spans 156 residues: uncharacterized protein (156 aa).

The first 18 residues, 1–18, serve as a signal peptide directing secretion; that stretch reads MKKLLSIFLMAFSLNAFA. A Thioredoxin domain is found at 19–156; that stretch reads QTNLADVQLK…AEQIRVFAEK (138 aa). Cysteine 54 and cysteine 57 form a disulfide bridge.

This sequence belongs to the thioredoxin family.

This is an uncharacterized protein from Haemophilus influenzae (strain ATCC 51907 / DSM 11121 / KW20 / Rd).